The following is a 339-amino-acid chain: Phenylalanine--tRNA ligase alpha subunit (339 aa).

A Mg(2+)-binding site is contributed by Glu-250.

It belongs to the class-II aminoacyl-tRNA synthetase family. Phe-tRNA synthetase alpha subunit type 1 subfamily. As to quaternary structure, tetramer of two alpha and two beta subunits. Requires Mg(2+) as cofactor.

Its subcellular location is the cytoplasm. It carries out the reaction tRNA(Phe) + L-phenylalanine + ATP = L-phenylalanyl-tRNA(Phe) + AMP + diphosphate + H(+). This chain is Phenylalanine--tRNA ligase alpha subunit, found in Bacteroides fragilis (strain ATCC 25285 / DSM 2151 / CCUG 4856 / JCM 11019 / LMG 10263 / NCTC 9343 / Onslow / VPI 2553 / EN-2).